Reading from the N-terminus, the 418-residue chain is Light-independent protochlorophyllide reductase subunit N (418 aa).

3 residues coordinate [4Fe-4S] cluster: Cys17, Cys42, and Cys103.

This sequence belongs to the BchN/ChlN family. In terms of assembly, protochlorophyllide reductase is composed of three subunits; ChlL, ChlN and ChlB. Forms a heterotetramer of two ChlB and two ChlN subunits. [4Fe-4S] cluster serves as cofactor.

It carries out the reaction chlorophyllide a + oxidized 2[4Fe-4S]-[ferredoxin] + 2 ADP + 2 phosphate = protochlorophyllide a + reduced 2[4Fe-4S]-[ferredoxin] + 2 ATP + 2 H2O. It functions in the pathway porphyrin-containing compound metabolism; chlorophyll biosynthesis (light-independent). In terms of biological role, component of the dark-operative protochlorophyllide reductase (DPOR) that uses Mg-ATP and reduced ferredoxin to reduce ring D of protochlorophyllide (Pchlide) to form chlorophyllide a (Chlide). This reaction is light-independent. The NB-protein (ChlN-ChlB) is the catalytic component of the complex. The polypeptide is Light-independent protochlorophyllide reductase subunit N (Prochlorococcus marinus (strain MIT 9211)).